We begin with the raw amino-acid sequence, 674 residues long: Metal-nicotianamine transporter YSL2 (674 aa).

Residues 1–29 are disordered; sequence MEAAAPEIERCDAGDVESDHDGAAAAAER. Positions 7-22 are enriched in basic and acidic residues; the sequence is EIERCDAGDVESDHDG. The next 14 membrane-spanning stretches (helical) occupy residues 41-61, 64-84, 118-138, 162-182, 224-244, 283-303, 329-349, 392-412, 420-440, 452-472, 506-526, 559-579, 604-624, and 633-653; these read GMVA…KLAL, GIIP…LRGW, CAVA…LLAL, GVGW…LNLL, GFLN…FYTG, LVNL…WPLI, FMCV…VTGI, LAYA…PIMF, VVVA…GTGL, IALF…AGLV, VGQA…FLLF, SALP…SVLI, FLVG…VFAW, and ALLV…WMFP.

This sequence belongs to the YSL (TC 2.A.67.2) family. Expressed in phloem cells of vascular bundles in leaves and leaf sheaths. Expressed at low levels in phloem companion cells in the central cylinder of roots, but not in the epidermal or cortical cells.

It is found in the cell membrane. Functionally, involved in the phloem transport of iron and manganese and their translocation into the grain. Transports iron- and manganese-nicotianamine chelates, but not iron-phytosiderophore. The sequence is that of Metal-nicotianamine transporter YSL2 (YSL2) from Oryza sativa subsp. japonica (Rice).